We begin with the raw amino-acid sequence, 106 residues long: uncharacterized protein (106 aa).

Residues 78–98 (LAITGYVVSIPIVLPILIIFI) traverse the membrane as a helical segment.

Its subcellular location is the membrane. This is an uncharacterized protein from Haemophilus influenzae (strain ATCC 51907 / DSM 11121 / KW20 / Rd).